Reading from the N-terminus, the 107-residue chain is Thioredoxin-1 (107 aa).

The region spanning 2 to 106 (ASVRTMNDYH…LTNMMAKLVK (105 aa)) is the Thioredoxin domain. Catalysis depends on nucleophile residues Cys31 and Cys34. Cysteines 31 and 34 form a disulfide.

The protein belongs to the thioredoxin family. Ovary specific. Expressed present in the nurse cells from stage 9 of ovary development and is transported into the oocyte. Expressed throughout oogenesis.

It localises to the nucleus. Functionally, participates in various redox reactions through the reversible oxidation of its active center dithiol to a disulfide and catalyzes dithiol-disulfide exchange reactions. As a reducing substrate of peroxiredoxin 1, thioredoxin 2 is preferred over thioredoxin 1. Required for female meiosis and early embryonic development. This Drosophila melanogaster (Fruit fly) protein is Thioredoxin-1 (dhd).